Reading from the N-terminus, the 607-residue chain is Vacuolar fusion protein MON1 homolog (607 aa).

Residues 1–14 (MATSDSRSSPSSSD) show a composition bias toward low complexity. Disordered stretches follow at residues 1–173 (MATS…DDAS) and 463–486 (PIDR…DISV). The span at 21-55 (NPSSDPETNSERVQSQLESMNLSQPSEVSDGSHTE) shows a compositional bias: polar residues.

It belongs to the MON1/SAND family. As to quaternary structure, interacts with CCZ1A, CCZ1B and RABF2B. As to expression, widely expressed at stable levels.

The protein resides in the endosome. It is found in the prevacuolar compartment. Functionally, plays an important role in membrane trafficking through the secretory apparatus. In complex with CCZ1, acts as a guanine exchange factor (GEF) for RABG3F of the Rab7 protein family. Promotes the exchange of GDP to GTP, converting RABG3F from an inactive GDP-bound form into an active GTP-bound form. The RABG3F active form is involved in protein trafficking from prevacuolar compartments (PVCs) to vacuoles. May serve as a linker between Rab5 and Rab7 protein families in PVCs and mediate PVC maturation. The chain is Vacuolar fusion protein MON1 homolog from Arabidopsis thaliana (Mouse-ear cress).